Reading from the N-terminus, the 267-residue chain is Palmitoyltransferase ZDHHC12 (267 aa).

Topologically, residues 1-9 are cytoplasmic; sequence MAPWALLSP. Residues 10 to 30 traverse the membrane as a helical segment; it reads GVLVRTGHTVLTWGITLVLFL. Residues 31–43 are Lumenal-facing; it reads HDTELRQWEEQGE. A helical membrane pass occupies residues 44 to 64; the sequence is LLLPLTFLLLVLGSLLLYLAV. Over 65 to 140 the chain is Cytoplasmic; the sequence is SLMDPGYVNV…ENCVGERNHP (76 aa). A DHHC domain is found at 97–147; that stretch reads RRCRYCLVLQPLRARHCRECRRCVRRYDHHCPWMENCVGERNHPLFVVYLA. C127 (S-palmitoyl cysteine intermediate) is an active-site residue. Residues 141–161 traverse the membrane as a helical segment; the sequence is LFVVYLALQLVVLLWGLYLAW. The Lumenal portion of the chain corresponds to 162–178; it reads SGLRFFQPWGQWLRSSG. The helical transmembrane segment at 179–199 threads the bilayer; the sequence is LLFATFLLLSLFSLVASLLLV. The Cytoplasmic portion of the chain corresponds to 200 to 267; it reads SHLYLVASNT…EEEEGSSPAV (68 aa).

It belongs to the DHHC palmitoyltransferase family. In terms of tissue distribution, widely expressed.

Its subcellular location is the golgi apparatus membrane. It localises to the endoplasmic reticulum membrane. The enzyme catalyses L-cysteinyl-[protein] + hexadecanoyl-CoA = S-hexadecanoyl-L-cysteinyl-[protein] + CoA. Palmitoyltransferase that catalyzes the addition of palmitate onto various protein substrates. Has a palmitoyltransferase activity toward gephyrin/GPHN, regulating its clustering at synapses and its function in gamma-aminobutyric acid receptor clustering. Thereby, indirectly regulates GABAergic synaptic transmission. Negatively regulates NLRP3-driven inflammation. Catalyzes NLRP3 palmitoylation, leading to its degradation via the chaperone-mediated autophagy (CMA) process. In Homo sapiens (Human), this protein is Palmitoyltransferase ZDHHC12.